A 246-amino-acid polypeptide reads, in one-letter code: tRNA pseudouridine synthase A (246 aa).

Asp52 serves as the catalytic Nucleophile. Tyr112 is a substrate binding site.

This sequence belongs to the tRNA pseudouridine synthase TruA family. Homodimer.

The catalysed reaction is uridine(38/39/40) in tRNA = pseudouridine(38/39/40) in tRNA. Functionally, formation of pseudouridine at positions 38, 39 and 40 in the anticodon stem and loop of transfer RNAs. The sequence is that of tRNA pseudouridine synthase A from Pelagibacter ubique (strain HTCC1062).